Consider the following 787-residue polypeptide: Alpha-glucosidase 2 (787 aa).

Residues Asp-407 and Glu-410 contribute to the active site. Asp-484 acts as the Proton donor in catalysis.

This sequence belongs to the glycosyl hydrolase 31 family. Homohexamer.

It catalyses the reaction Hydrolysis of terminal, non-reducing (1-&gt;4)-linked alpha-D-glucose residues with release of alpha-D-glucose.. This chain is Alpha-glucosidase 2, found in Bacillus thermoamyloliquefaciens.